Consider the following 430-residue polypeptide: Adenylosuccinate synthetase (430 aa).

GTP contacts are provided by residues 12-18 (GDEGKGK) and 40-42 (GHT). The active-site Proton acceptor is the Asp-13. Asp-13 and Gly-40 together coordinate Mg(2+). IMP is bound by residues 13–16 (DEGK), 38–41 (NAGH), Thr-130, Arg-144, Gln-224, Thr-239, and Arg-303. The active-site Proton donor is His-41. Residue 299–305 (VNTGRKR) coordinates substrate. Residues Arg-305, 331–333 (KLD), and 413–415 (STS) each bind GTP.

This sequence belongs to the adenylosuccinate synthetase family. In terms of assembly, homodimer. Mg(2+) is required as a cofactor.

It localises to the cytoplasm. It carries out the reaction IMP + L-aspartate + GTP = N(6)-(1,2-dicarboxyethyl)-AMP + GDP + phosphate + 2 H(+). It participates in purine metabolism; AMP biosynthesis via de novo pathway; AMP from IMP: step 1/2. Functionally, plays an important role in the de novo pathway of purine nucleotide biosynthesis. Catalyzes the first committed step in the biosynthesis of AMP from IMP. In Rhodopseudomonas palustris (strain TIE-1), this protein is Adenylosuccinate synthetase.